Reading from the N-terminus, the 163-residue chain is Lipoprotein signal peptidase (163 aa).

4 helical membrane passes run 5–25 (VLTFLGISFVIIVLDLTTKSL), 37–57 (IIPGLFNLVLVWNKGAAFGML), 67–87 (LMLVGSSIIAAVITAGYVFKS), and 91–111 (LSNLEVLSLALICGGSVGNLY). Catalysis depends on residues Asp-121 and Asp-139. The chain crosses the membrane as a helical span at residues 132 to 152 (WPAFNVADASITIGIALFIGY).

This sequence belongs to the peptidase A8 family.

It localises to the cell inner membrane. It carries out the reaction Release of signal peptides from bacterial membrane prolipoproteins. Hydrolyzes -Xaa-Yaa-Zaa-|-(S,diacylglyceryl)Cys-, in which Xaa is hydrophobic (preferably Leu), and Yaa (Ala or Ser) and Zaa (Gly or Ala) have small, neutral side chains.. It functions in the pathway protein modification; lipoprotein biosynthesis (signal peptide cleavage). Its function is as follows. This protein specifically catalyzes the removal of signal peptides from prolipoproteins. The protein is Lipoprotein signal peptidase of Sulfurihydrogenibium sp. (strain YO3AOP1).